Consider the following 226-residue polypeptide: MASFLSRLPQGKVVAALIVLLLVVDQVIKIWVKTTMVLGQSHVVAPWFQIHFVENPGMAFGIELGSKLFLSLFRIVAMGFCIYLLAKLVRKREHTLAFLSCLSLIIAGGIGNIIDSIFYGVIFSGSHGQIAQLFPSGGGYETWFHGRVVDMFYFPLIEGVFPSWLPFWGGEEFVFFHPVFNFADSCISIGLILLLVCYPRTVSLLLDGKKTLPEGTTEDSEPTKRE.

Helical transmembrane passes span 12 to 32, 69 to 89, and 103 to 123; these read KVVA…KIWV, FLSL…AKLV, and SLII…GVIF. Catalysis depends on residues Asp-150 and Asp-184. The helical transmembrane segment at 173-193 threads the bilayer; it reads FVFFHPVFNFADSCISIGLIL.

Belongs to the peptidase A8 family.

The protein resides in the cell inner membrane. It carries out the reaction Release of signal peptides from bacterial membrane prolipoproteins. Hydrolyzes -Xaa-Yaa-Zaa-|-(S,diacylglyceryl)Cys-, in which Xaa is hydrophobic (preferably Leu), and Yaa (Ala or Ser) and Zaa (Gly or Ala) have small, neutral side chains.. The protein operates within protein modification; lipoprotein biosynthesis (signal peptide cleavage). Functionally, this protein specifically catalyzes the removal of signal peptides from prolipoproteins. The polypeptide is Lipoprotein signal peptidase (Porphyromonas gingivalis (strain ATCC 33277 / DSM 20709 / CIP 103683 / JCM 12257 / NCTC 11834 / 2561)).